The chain runs to 104 residues: Small ribosomal subunit protein uS10 (104 aa).

It belongs to the universal ribosomal protein uS10 family. In terms of assembly, part of the 30S ribosomal subunit.

Its function is as follows. Involved in the binding of tRNA to the ribosomes. The sequence is that of Small ribosomal subunit protein uS10 from Helicobacter pylori (strain P12).